The following is a 216-amino-acid chain: Large ribosomal subunit protein uL1z (216 aa).

Belongs to the universal ribosomal protein uL1 family. Interacts with the GTPase NUG2.

This is Large ribosomal subunit protein uL1z (RPL10AA) from Arabidopsis thaliana (Mouse-ear cress).